A 121-amino-acid chain; its full sequence is Non-structural protein 3a (121 aa).

An N-terminal signal peptide occupies residues M1 to S39.

In Bat coronavirus HKU5 (BtCoV), this protein is Non-structural protein 3a.